The following is a 197-amino-acid chain: Peptidoglycan-recognition protein 1 (197 aa).

The first 23 residues, 1 to 23 (MKLATITFFLLTEIFFYISYAEA), serve as a signal peptide directing secretion. Disulfide bonds link cysteine 31/cysteine 154 and cysteine 68/cysteine 74. An N-acetylmuramoyl-L-alanine amidase domain is found at 53–180 (KPLERVVIHH…RNVKATKSPG (128 aa)).

The protein belongs to the N-acetylmuramoyl-L-alanine amidase 2 family. Localizes to plasma (at protein level).

It localises to the secreted. Functionally, peptidoglycan-recognition protein probably involved in innate immunity by binding to peptidoglycans (PGN) of bacteria and activating the prophenoloxidase (proPO) cascade immune response. Binds to 1,3-beta-D-glucan and PGN. The chain is Peptidoglycan-recognition protein 1 (PGRP-1) from Holotrichia diomphalia (Korean black chafer).